We begin with the raw amino-acid sequence, 33 residues long: Photosystem II reaction center protein Psb30 (33 aa).

Residues 5–25 (ILSQLIAIAVTLFLGPVVVIL) form a helical membrane-spanning segment.

This sequence belongs to the Psb30/Ycf12 family. In terms of assembly, PSII is composed of 1 copy each of membrane proteins PsbA, PsbB, PsbC, PsbD, PsbE, PsbF, PsbH, PsbI, PsbJ, PsbK, PsbL, PsbM, PsbT, PsbX, PsbY, PsbZ, Psb30/Ycf12, peripheral proteins of the oxygen-evolving complex and a large number of cofactors. It forms dimeric complexes.

The protein resides in the plastid. It is found in the chloroplast thylakoid membrane. A core subunit of photosystem II (PSII), probably helps stabilize the reaction center. The protein is Photosystem II reaction center protein Psb30 of Oedogonium cardiacum (Filamentous green alga).